We begin with the raw amino-acid sequence, 363 residues long: UDP-N-acetylglucosamine--N-acetylmuramyl-(pentapeptide) pyrophosphoryl-undecaprenol N-acetylglucosamine transferase (363 aa).

Residues 14–16 (TGG), arginine 171, serine 200, and glutamine 290 contribute to the UDP-N-acetyl-alpha-D-glucosamine site.

This sequence belongs to the glycosyltransferase 28 family. MurG subfamily.

The protein localises to the cell inner membrane. It catalyses the reaction di-trans,octa-cis-undecaprenyl diphospho-N-acetyl-alpha-D-muramoyl-L-alanyl-D-glutamyl-meso-2,6-diaminopimeloyl-D-alanyl-D-alanine + UDP-N-acetyl-alpha-D-glucosamine = di-trans,octa-cis-undecaprenyl diphospho-[N-acetyl-alpha-D-glucosaminyl-(1-&gt;4)]-N-acetyl-alpha-D-muramoyl-L-alanyl-D-glutamyl-meso-2,6-diaminopimeloyl-D-alanyl-D-alanine + UDP + H(+). It functions in the pathway cell wall biogenesis; peptidoglycan biosynthesis. In terms of biological role, cell wall formation. Catalyzes the transfer of a GlcNAc subunit on undecaprenyl-pyrophosphoryl-MurNAc-pentapeptide (lipid intermediate I) to form undecaprenyl-pyrophosphoryl-MurNAc-(pentapeptide)GlcNAc (lipid intermediate II). This chain is UDP-N-acetylglucosamine--N-acetylmuramyl-(pentapeptide) pyrophosphoryl-undecaprenol N-acetylglucosamine transferase, found in Borreliella afzelii (strain PKo) (Borrelia afzelii).